A 1203-amino-acid polypeptide reads, in one-letter code: Transmembrane channel-like protein 2 (1203 aa).

Disordered regions lie at residues 1–39 and 64–90; these read MPKS…IDSR and PHTR…EASK. Residues 73-86 show a composition bias toward acidic residues; sequence FDDDDDEFDEEDDK. Residues 191-213 form a helical membrane-spanning segment; sequence VLGVNITITFIMCMFVVIPEWLA. A glycan (N-linked (GlcNAc...) asparagine) is linked at asparagine 225. Transmembrane regions (helical) follow at residues 276 to 298, 369 to 391, 406 to 428, 441 to 463, 665 to 687, and 714 to 736; these read YRVP…FIIL, FVAR…WAIM, ATAI…LGKI, LGRV…MLQL, MIWL…LIIL, and FFFA…VIAS. N-linked (GlcNAc...) asparagine glycosylation occurs at asparagine 748. A helical transmembrane segment spans residues 780–802; sequence IIIPVLVLLSLVIYFLIAMVTGL. Disordered stretches follow at residues 826–908, 927–1039, 1059–1087, and 1112–1203; these read ELAG…SLPP, KYGR…IEKQ, ATVE…HEPL, and NDET…SDND. Residues 865-874 are compositionally biased toward polar residues; sequence NRSTAKSVSG. Positions 898-908 are enriched in low complexity; the sequence is DSESTTSSLPP. Residues 927–945 show a composition bias toward basic and acidic residues; it reads KYGRHDDIEMEEGGGRLRE. Composition is skewed to low complexity over residues 973–997 and 1022–1035; these read QSFD…PSNS and SASS…PSSS. A compositionally biased stretch (polar residues) spans 1061–1076; the sequence is VENSSQDPTRPPSTDD. 2 stretches are compositionally biased toward basic and acidic residues: residues 1133–1147 and 1172–1203; these read SPRE…KDQQ and PPSE…SDND.

The protein belongs to the TMC family.

Its subcellular location is the membrane. Functionally, probable ion channel. The polypeptide is Transmembrane channel-like protein 2 (tmc-2) (Caenorhabditis elegans).